A 147-amino-acid polypeptide reads, in one-letter code: Hemoglobin subunit gamma (147 aa).

In terms of domain architecture, Globin spans 3–147 (NFTAEDKAAI…VASALASRYH (145 aa)). 2 residues coordinate heme b: His64 and His93.

This sequence belongs to the globin family. As to quaternary structure, heterotetramer of two alpha chains and two gamma chains in fetal hemoglobin (Hb F). In terms of tissue distribution, red blood cells.

Functionally, gamma chains make up the fetal hemoglobin F, in combination with alpha chains. The protein is Hemoglobin subunit gamma (HBG) of Alouatta belzebul (Red-handed howler monkey).